A 714-amino-acid chain; its full sequence is Fatty acid oxidation complex subunit alpha (714 aa).

The interval 1-190 (MEMASAFTLN…KLGLVDDVVP (190 aa)) is enoyl-CoA hydratase. Positions 306–714 (APLNSVGILG…FWKTTATDLQ (409 aa)) are 3-hydroxyacyl-CoA dehydrogenase.

It in the N-terminal section; belongs to the enoyl-CoA hydratase/isomerase family. In the central section; belongs to the 3-hydroxyacyl-CoA dehydrogenase family. In terms of assembly, heterotetramer of two alpha chains (FadJ) and two beta chains (FadI).

It is found in the cytoplasm. The catalysed reaction is a (3S)-3-hydroxyacyl-CoA = a (2E)-enoyl-CoA + H2O. It catalyses the reaction a 4-saturated-(3S)-3-hydroxyacyl-CoA = a (3E)-enoyl-CoA + H2O. It carries out the reaction a (3S)-3-hydroxyacyl-CoA + NAD(+) = a 3-oxoacyl-CoA + NADH + H(+). The enzyme catalyses (3S)-3-hydroxybutanoyl-CoA = (3R)-3-hydroxybutanoyl-CoA. It functions in the pathway lipid metabolism; fatty acid beta-oxidation. Catalyzes the formation of a hydroxyacyl-CoA by addition of water on enoyl-CoA. Also exhibits 3-hydroxyacyl-CoA epimerase and 3-hydroxyacyl-CoA dehydrogenase activities. This chain is Fatty acid oxidation complex subunit alpha, found in Escherichia coli O9:H4 (strain HS).